We begin with the raw amino-acid sequence, 1941 residues long: Integrin beta-like protein B (1941 aa).

The first 20 residues, 1 to 20 (MKNIIKYLFIFLCFLIITEA), serve as a signal peptide directing secretion. Residues 21-1871 (THFRYGTISW…VTTQNSSNKT (1851 aa)) lie on the Extracellular side of the membrane. Residues 420–457 (YGDKCTVLPPCKNGVPNGGVNGDGKCLCNNGWTGSDCS) form the EGF-like domain. 2 disulfide bridges follow: cysteine 430–cysteine 445 and cysteine 447–cysteine 456. The region spanning 513 to 696 (DVYLLVDANM…AGIKAVSSKL (184 aa)) is the VWFA domain. 10 N-linked (GlcNAc...) asparagine glycosylation sites follow: asparagine 1400, asparagine 1505, asparagine 1530, asparagine 1606, asparagine 1652, asparagine 1738, asparagine 1777, asparagine 1848, asparagine 1866, and asparagine 1869. The chain crosses the membrane as a helical span at residues 1872–1892 (VLSGAIAGAAAGTALIAAAMW). The Cytoplasmic segment spans residues 1893 to 1941 (KMLRKAAPPTDAFFDEGAFLGDGVNSNPMYQESKNGGENPLYLASNETL). The segment at 1921–1941 (MYQESKNGGENPLYLASNETL) is disordered.

It belongs to the SIB family. Interacts with talA/talin.

It localises to the membrane. Implicated in cellular adhesion. The protein is Integrin beta-like protein B (sibB) of Dictyostelium discoideum (Social amoeba).